The primary structure comprises 342 residues: Dihydroorotase (342 aa).

Positions 13 and 15 each coordinate Zn(2+). Substrate-binding positions include 15–17 (HLR) and asparagine 41. Zn(2+) contacts are provided by lysine 98, histidine 135, and histidine 173. N6-carboxylysine is present on lysine 98. Histidine 135 serves as a coordination point for substrate. Leucine 218 lines the substrate pocket. Aspartate 246 is a Zn(2+) binding site. The active site involves aspartate 246. Residues histidine 250 and alanine 262 each coordinate substrate.

The protein belongs to the metallo-dependent hydrolases superfamily. DHOase family. Class II DHOase subfamily. Homodimer. The cofactor is Zn(2+).

The catalysed reaction is (S)-dihydroorotate + H2O = N-carbamoyl-L-aspartate + H(+). Its pathway is pyrimidine metabolism; UMP biosynthesis via de novo pathway; (S)-dihydroorotate from bicarbonate: step 3/3. Catalyzes the reversible cyclization of carbamoyl aspartate to dihydroorotate. The polypeptide is Dihydroorotase (Photobacterium profundum (strain SS9)).